A 459-amino-acid polypeptide reads, in one-letter code: Putrescine aminotransferase (459 aa).

Pyridoxal 5'-phosphate is bound by residues 150–151 and Gln274; that span reads GT. N6-(pyridoxal phosphate)lysine is present on Lys300. A pyridoxal 5'-phosphate-binding site is contributed by Thr332.

It belongs to the class-III pyridoxal-phosphate-dependent aminotransferase family. Putrescine aminotransferase subfamily. The cofactor is pyridoxal 5'-phosphate.

The enzyme catalyses an alkane-alpha,omega-diamine + 2-oxoglutarate = an omega-aminoaldehyde + L-glutamate. It carries out the reaction putrescine + 2-oxoglutarate = 1-pyrroline + L-glutamate + H2O. It catalyses the reaction cadaverine + 2-oxoglutarate = 5-aminopentanal + L-glutamate. Its pathway is amine and polyamine degradation; putrescine degradation; 4-aminobutanal from putrescine (transaminase route): step 1/1. Its function is as follows. Catalyzes the aminotransferase reaction from putrescine to 2-oxoglutarate, leading to glutamate and 4-aminobutanal, which spontaneously cyclizes to form 1-pyrroline. This is the first step in one of two pathways for putrescine degradation, where putrescine is converted into 4-aminobutanoate (gamma-aminobutyrate or GABA) via 4-aminobutanal. Also functions as a cadaverine transaminase in a a L-lysine degradation pathway to succinate that proceeds via cadaverine, glutarate and L-2-hydroxyglutarate. In Klebsiella pneumoniae (strain 342), this protein is Putrescine aminotransferase.